A 297-amino-acid polypeptide reads, in one-letter code: HTH-type transcriptional regulator ArgP (297 aa).

In terms of domain architecture, HTH lysR-type spans 4–60 (PDYRTLQALDAVIRERGFERAAQKLCITQSAVSQRIKQLENMFGQPLLVRTVPPRPT). Positions 21–40 (FERAAQKLCITQSAVSQRIK) form a DNA-binding region, H-T-H motif.

It belongs to the LysR transcriptional regulatory family. In terms of assembly, homodimer.

Functionally, controls the transcription of genes involved in arginine and lysine metabolism. In Salmonella arizonae (strain ATCC BAA-731 / CDC346-86 / RSK2980), this protein is HTH-type transcriptional regulator ArgP.